The primary structure comprises 56 residues: Large ribosomal subunit protein eL37 (56 aa).

Zn(2+) contacts are provided by cysteine 19, cysteine 22, cysteine 34, and cysteine 37. The C4-type zinc-finger motif lies at 19-37 (CRRCGSVSLNIHTKQCTSC).

The protein belongs to the eukaryotic ribosomal protein eL37 family. It depends on Zn(2+) as a cofactor.

Binds to the 23S rRNA. The polypeptide is Large ribosomal subunit protein eL37 (Methanococcoides burtonii (strain DSM 6242 / NBRC 107633 / OCM 468 / ACE-M)).